The chain runs to 339 residues: Tetraacyldisaccharide 4'-kinase (339 aa).

62–69 (VAGGTGKT) serves as a coordination point for ATP.

Belongs to the LpxK family.

It catalyses the reaction a lipid A disaccharide + ATP = a lipid IVA + ADP + H(+). Its pathway is glycolipid biosynthesis; lipid IV(A) biosynthesis; lipid IV(A) from (3R)-3-hydroxytetradecanoyl-[acyl-carrier-protein] and UDP-N-acetyl-alpha-D-glucosamine: step 6/6. Functionally, transfers the gamma-phosphate of ATP to the 4'-position of a tetraacyldisaccharide 1-phosphate intermediate (termed DS-1-P) to form tetraacyldisaccharide 1,4'-bis-phosphate (lipid IVA). The protein is Tetraacyldisaccharide 4'-kinase of Xylella fastidiosa (strain M23).